We begin with the raw amino-acid sequence, 763 residues long: Phosphoglycerol transferase I (763 aa).

4 helical membrane passes run 1–21, 26–46, 77–97, and 108–128; these read MSEL…AWKA, WWFA…ITLY, ILPG…LGWI, and VGYS…SPAF.

This sequence belongs to the OpgB family.

Its subcellular location is the cell inner membrane. It catalyses the reaction a phosphatidylglycerol + a membrane-derived-oligosaccharide D-glucose = a 1,2-diacyl-sn-glycerol + a membrane-derived-oligosaccharide 6-(glycerophospho)-D-glucose.. It functions in the pathway glycan metabolism; osmoregulated periplasmic glucan (OPG) biosynthesis. Transfers a phosphoglycerol residue from phosphatidylglycerol to the membrane-bound nascent glucan backbones. The protein is Phosphoglycerol transferase I of Salmonella newport (strain SL254).